Consider the following 228-residue polypeptide: UPF0758 protein CLK_2387 (228 aa).

The MPN domain maps to 106–228 (KISTPLDVSN…YVSMKEKGTI (123 aa)). 3 residues coordinate Zn(2+): H177, H179, and D190. The short motif at 177-190 (HNHPSGDPTPSKED) is the JAMM motif element.

This sequence belongs to the UPF0758 family.

This is UPF0758 protein CLK_2387 from Clostridium botulinum (strain Loch Maree / Type A3).